The sequence spans 553 residues: Mannuronan C5-epimerase AlgE4 (553 aa).

PbH1 repeat units lie at residues 133–155 (DRDV…DPHE), 157–179 (TINL…VADY), 180–202 (LVDS…NVVT), 204–226 (THDF…VVQR), 234–256 (PSNI…LLKM), 257–279 (TSDI…RVYG), 280–301 (AQDV…AVPE), and 320–342 (TLNT…GIQE). The interval 367 to 427 (YGPHSTVSGE…DILDGGAGRD (61 aa)) is disordered. 2 Hemolysin-type calcium-binding repeats span residues 403–420 (QGGS…DDIL) and 421–438 (DGGA…ADTF).

Belongs to the D-mannuronate C5-epimerase family. Ca(2+) serves as cofactor.

The protein resides in the secreted. It carries out the reaction [(1-&gt;4)-beta-D-mannuronosyl](n) = [alginate](n). The protein operates within glycan biosynthesis; alginate biosynthesis. With respect to regulation, inhibited by zinc. Converts beta-D-mannuronic acid (M) to alpha-L-guluronic acid (G), but introduces almost exclusively MG blocks, producing a polymer with non-gel-forming capacity. The chain is Mannuronan C5-epimerase AlgE4 from Azotobacter vinelandii.